Here is a 637-residue protein sequence, read N- to C-terminus: Conglutin beta 5 (637 aa).

Residues 1–30 (MAKMRVRFPMLVLLLGVVFLLAVSIGIAYG) form the signal peptide. Composition is skewed to basic and acidic residues over residues 33–105 (DVIK…REQE), 136–174 (RREE…REQE), and 184–203 (DYGR…REQE). 2 disordered regions span residues 33–221 (DVIK…YFSS) and 384–439 (EQED…LRSN). Residues 217-375 (YYFSSERFQT…TFNTHYEEIQ (159 aa)) enclose the Cupin type-1 1 domain. Residues 389 to 417 (EQRREQEQSHQDEGVIVRVSKEQIQELRK) are compositionally biased toward basic and acidic residues. Residues 434–594 (FNLRSNEPIY…IFPGSAEDVE (161 aa)) form the Cupin type-1 2 domain. N544 carries an N-linked (GlcNAc...) asparagine glycan. Over residues 606–615 (ANAQPQQQQQ) the composition is skewed to low complexity. Residues 606-626 (ANAQPQQQQQQREKEGRRGRR) are disordered.

This sequence belongs to the 7S seed storage protein family. As to quaternary structure, component of globulins complexes which accumulate in seeds.

Its function is as follows. Seed storage protein. Accumulates during seed development and is hydrolyzed after germination to provide a carbon and nitrogen source for the developing seedling. This Lupinus angustifolius (Narrow-leaved blue lupine) protein is Conglutin beta 5.